We begin with the raw amino-acid sequence, 325 residues long: MKKHISMLFVFLMAVMVLSACNSSESSSNSEVSSSKTRTVKHAMGTSDNIPANPKRIVVLTNEGTEALLALGIKPVGAVKSWKGDPWYDYLKDDMKGVKNVGLETEPNVEAIAELKPDLIIGNKVRQEKIYDQLNAIAPTVFAESLAGNWKDNLTLYANAVNKADKGKEVIADFDKRVSDLKNKLGDQTNKTVSVVRFLSGESRIYYTDSFPGIILDQLGFKRPEKQVELFKKQKDQFTFSTDSKESIPDMDADVLFYFTYKADNAKENEKWANQWTSSSLWKNLKAVKSGNAHEVDDVVWTTAGGIKAANYLLDDIETYFLKTK.

Positions 1-20 (MKKHISMLFVFLMAVMVLSA) are cleaved as a signal peptide. Residue Cys-21 is the site of N-palmitoyl cysteine attachment. A lipid anchor (S-diacylglycerol cysteine) is attached at Cys-21. The Fe/B12 periplasmic-binding domain occupies 56–325 (RIVVLTNEGT…DIETYFLKTK (270 aa)). The residue at position 290 (Ser-290) is a Phosphoserine. The residue at position 302 (Thr-302) is a Phosphothreonine.

Belongs to the bacterial solute-binding protein 8 family. As to quaternary structure, the complex is composed of one ATP-binding protein (YusV), two transmembrane proteins (YfiZ and YfhA) and a solute-binding protein (YfiY). Interacts with FloT.

The protein localises to the cell membrane. It is found in the cytoplasm. It localises to the membrane raft. Functionally, part of the ABC transporter complex YfiYZ/YfhA/YusV involved in import of the iron-hydroxamate siderophores schizokinen, arthrobactin and corprogen. Binds the siderophores and delivers them to the surface of YfiZ/YfhA. The chain is Probable siderophore-binding lipoprotein YfiY (yfiY) from Bacillus subtilis (strain 168).